The following is a 109-amino-acid chain: Small ribosomal subunit protein uS17 (109 aa).

This sequence belongs to the universal ribosomal protein uS17 family. Part of the 30S ribosomal subunit.

In terms of biological role, one of the primary rRNA binding proteins, it binds specifically to the 5'-end of 16S ribosomal RNA. This Methanococcoides burtonii (strain DSM 6242 / NBRC 107633 / OCM 468 / ACE-M) protein is Small ribosomal subunit protein uS17.